Consider the following 315-residue polypeptide: BTB/POZ domain-containing adapter for CUL3-mediated RhoA degradation protein 3 (315 aa).

M1 carries the N-acetylmethionine modification. The residue at position 23 (S23) is a Phosphoserine. The 69-residue stretch at 32-100 (KYVKLNVGGA…LRDGGVPLPE (69 aa)) folds into the BTB domain. The PCNA-binding signature appears at 239–245 (QTKVEFP). The segment at 269–294 (NALLEATGGAAGRSHHLDEDEERERE) is disordered.

Belongs to the BACURD family. As to quaternary structure, homotetramer; forms a two-fold symmetric tetramer in solution. Interacts with CUL3; interaction is direct and forms a 5:5 heterodecamer. Component of the BCR(BACURD3) E3 ubiquitin ligase complex, at least composed of CUL3, KCTD10/BACURD3 and RBX1. Interacts with DNA polymerase delta subunit 2/POLD2. Interacts with PCNA. Associated with the tectonic-like complex (also named B9 complex); however as Kctd10 has not been identified in all tectonic-like complexes purifications it is unclear whether it is really part of the complex.

The protein resides in the nucleus. The protein operates within protein modification; protein ubiquitination. In terms of biological role, substrate-specific adapter of a BCR (BTB-CUL3-RBX1) E3 ubiquitin-protein ligase complex. The BCR(BACURD3) E3 ubiquitin ligase complex mediates the ubiquitination of target proteins, leading to their degradation by the proteasome. The polypeptide is BTB/POZ domain-containing adapter for CUL3-mediated RhoA degradation protein 3 (Kctd10) (Mus musculus (Mouse)).